A 66-amino-acid chain; its full sequence is Toxin Aah6 (66 aa).

The LCN-type CS-alpha/beta domain occupies 2–65 (RDGYVVKNGT…LYGDDGTYCS (64 aa)). N-linked (GlcNAc...) asparagine glycosylation occurs at asparagine 9. Intrachain disulfides connect cysteine 13-cysteine 64, cysteine 17-cysteine 40, cysteine 26-cysteine 45, and cysteine 30-cysteine 47.

This sequence belongs to the long (4 C-C) scorpion toxin superfamily. Sodium channel inhibitor family. Beta subfamily. In terms of processing, N-glycans are core-fucosylated, heterogeneous and short which could be the result of extensive trimming. As to expression, expressed by the venom gland.

It is found in the secreted. Its function is as follows. Beta toxins bind voltage-independently at site-4 of sodium channels and shift the voltage of activation toward more negative potentials thereby affecting sodium channel activation and promoting spontaneous and repetitive firing. This toxin is active only on insects. This toxin has very low anti-insect activity. The protein is Toxin Aah6 of Androctonus australis (Sahara scorpion).